Reading from the N-terminus, the 270-residue chain is Proteasome subunit alpha (270 aa).

Positions 229–270 (LLDTEAAGSTPTDAPSDTEDGDSTDGTDRADGTTDSTEETEK) are disordered. A compositionally biased stretch (acidic residues) spans 244-253 (SDTEDGDSTD).

This sequence belongs to the peptidase T1A family. As to quaternary structure, the 20S proteasome core is composed of 14 alpha and 14 beta subunits that assemble into four stacked heptameric rings, resulting in a barrel-shaped structure. The two inner rings, each composed of seven catalytic beta subunits, are sandwiched by two outer rings, each composed of seven alpha subunits. The catalytic chamber with the active sites is on the inside of the barrel. Has a gated structure, the ends of the cylinder being occluded by the N-termini of the alpha-subunits. Is capped by the proteasome-associated ATPase, ARC.

It localises to the cytoplasm. It functions in the pathway protein degradation; proteasomal Pup-dependent pathway. Its activity is regulated as follows. The formation of the proteasomal ATPase ARC-20S proteasome complex, likely via the docking of the C-termini of ARC into the intersubunit pockets in the alpha-rings, may trigger opening of the gate for substrate entry. Interconversion between the open-gate and close-gate conformations leads to a dynamic regulation of the 20S proteasome proteolysis activity. Functionally, component of the proteasome core, a large protease complex with broad specificity involved in protein degradation. The polypeptide is Proteasome subunit alpha (Streptomyces griseus subsp. griseus (strain JCM 4626 / CBS 651.72 / NBRC 13350 / KCC S-0626 / ISP 5235)).